Here is an 85-residue protein sequence, read N- to C-terminus: MNYLVMISLALLFMTGVESIKDGYIVDDRNCTYFCGTKSYCNGECTKLKGESGYCQWASPYGNACYCYKLPDHVRTKGPGRCKGR.

A signal peptide spans 1–19 (MNYLVMISLALLFMTGVES). One can recognise an LCN-type CS-alpha/beta domain in the interval 21 to 83 (KDGYIVDDRN…VRTKGPGRCK (63 aa)). Disulfide bonds link Cys-31–Cys-82, Cys-35–Cys-55, Cys-41–Cys-65, and Cys-45–Cys-67. Lys-83 is subject to Lysine amide.

Belongs to the long (4 C-C) scorpion toxin superfamily. Sodium channel inhibitor family. Alpha subfamily. Expressed by the venom gland.

The protein resides in the secreted. Its function is as follows. Alpha toxins bind voltage-independently at site-3 of sodium channels (Nav) and inhibit the inactivation of the activated channels, thereby blocking neuronal transmission. The protein is Alpha-toxin Ac2 of Androctonus crassicauda (Arabian fat-tailed scorpion).